A 686-amino-acid chain; its full sequence is Methionine--tRNA ligase (686 aa).

The 'HIGH' region motif lies at 15-25 (PYANGPIHLGH). The Zn(2+) site is built by Cys-146, Cys-149, Cys-159, and Cys-162. The 'KMSKS' region motif lies at 331–335 (KMSKS). Residue Lys-334 participates in ATP binding. A tRNA-binding domain is found at 584-686 (DFAKIDLRVA…AGVKAGSRVM (103 aa)).

The protein belongs to the class-I aminoacyl-tRNA synthetase family. MetG type 1 subfamily. As to quaternary structure, homodimer. The cofactor is Zn(2+).

It is found in the cytoplasm. The enzyme catalyses tRNA(Met) + L-methionine + ATP = L-methionyl-tRNA(Met) + AMP + diphosphate. In terms of biological role, is required not only for elongation of protein synthesis but also for the initiation of all mRNA translation through initiator tRNA(fMet) aminoacylation. The polypeptide is Methionine--tRNA ligase (Mannheimia succiniciproducens (strain KCTC 0769BP / MBEL55E)).